The sequence spans 533 residues: Probable RNA-binding protein 46 (533 aa).

RRM domains are found at residues 61–139 (CEVF…VSLD), 141–223 (CRLF…WADP), and 236–308 (KVLY…LAKP). Residues 338-362 (ESHSKSLGKPPTLPTRLNGQHSPSP) form a disordered region.

As to quaternary structure, interacts with YTHDC2, MEIOC, MOV10, CNOT6L, DDX4, UPF1 and PABPC1. Expressed in the testis and ovary (at protein level). Expressed in spermatogonia and spermatocytes in testis (at protein level).

It is found in the cytoplasm. Its function is as follows. Essential for male and female fertility, playing a crucial role in regulating germ cell development by ensuring the proper progression of meiosis prophase I. Regulates mitotic-to-meiotic transition in spermatogenesis by forming a complex with MEIOC and YTHDC2 which recognizes and down-regulates mitotic transcripts for a successful meiotic entry. Required for normal synaptonemal complex formation during meiosis, binding meiotic cohesin subunit mRNAs containing GCCUAU/GUUCGA motifs in their 3'UTRs regions and positively regulating their translation. Required for spermatogonial differentiation in both developing and adult testis. This is Probable RNA-binding protein 46 from Mus musculus (Mouse).